We begin with the raw amino-acid sequence, 199 residues long: Probable nicotinate-nucleotide adenylyltransferase (199 aa).

It belongs to the NadD family.

It carries out the reaction nicotinate beta-D-ribonucleotide + ATP + H(+) = deamido-NAD(+) + diphosphate. The protein operates within cofactor biosynthesis; NAD(+) biosynthesis; deamido-NAD(+) from nicotinate D-ribonucleotide: step 1/1. Functionally, catalyzes the reversible adenylation of nicotinate mononucleotide (NaMN) to nicotinic acid adenine dinucleotide (NaAD). The chain is Probable nicotinate-nucleotide adenylyltransferase from Roseiflexus sp. (strain RS-1).